We begin with the raw amino-acid sequence, 132 residues long: Small ribosomal subunit protein uS8 (132 aa).

The protein belongs to the universal ribosomal protein uS8 family. As to quaternary structure, part of the 30S ribosomal subunit. Contacts proteins S5 and S12.

Functionally, one of the primary rRNA binding proteins, it binds directly to 16S rRNA central domain where it helps coordinate assembly of the platform of the 30S subunit. This chain is Small ribosomal subunit protein uS8, found in Corynebacterium kroppenstedtii (strain DSM 44385 / JCM 11950 / CIP 105744 / CCUG 35717).